The sequence spans 213 residues: Glutathione S-transferase DHAR1, mitochondrial (213 aa).

2 residues coordinate glutathione: Lys-8 and Asp-19. L-ascorbate is bound by residues Lys-8 and Asp-19. A GST N-terminal domain is found at 10–83 (AVGAPDHLGD…DVIVGILEEK (74 aa)). Cys-20 functions as the Nucleophile in the catalytic mechanism. Cys-20 carries the S-glutathionyl cysteine modification. Positions 20-25 (CPFSQR) match the Glutathione-binding motif. Glutathione is bound by residues Lys-47, Val-60, and Ser-73. Residues 84-213 (YPDPPLKTPA…ISGWAPKVNP (130 aa)) enclose the GST C-terminal domain. Positions 133-137 (HLKSH) match the Copper-binding motif. Residues His-160 and Trp-207 each contribute to the glutathione site. Residue Lys-210 coordinates L-ascorbate.

This sequence belongs to the GST superfamily. DHAR family. As to quaternary structure, monomer. Interacts with copper (Cu). In terms of processing, spontaneous S-glutathionylation in the presence of oxidized glutathione (GSSG). Expressed at least in roots and leaves.

It is found in the mitochondrion. Its subcellular location is the cytoplasm. The protein resides in the cytosol. The protein localises to the peroxisome. It localises to the membrane. It carries out the reaction RX + glutathione = an S-substituted glutathione + a halide anion + H(+). The enzyme catalyses L-dehydroascorbate + 2 glutathione = glutathione disulfide + L-ascorbate. In terms of biological role, displays a dual function. As a soluble protein, exhibits glutathione-dependent thiol transferase and dehydroascorbate (DHA) reductase activities. Key component of the ascorbate recycling system. Involved in the redox homeostasis, especially in scavenging of ROS under oxidative stresses, subsequently to biotic or abiotic inducers. As a peripheral membrane protein, could also function as voltage-gated ion channel. This chain is Glutathione S-transferase DHAR1, mitochondrial, found in Arabidopsis thaliana (Mouse-ear cress).